We begin with the raw amino-acid sequence, 266 residues long: HTH-type transcriptional regulator MurR (266 aa).

An HTH rpiR-type domain is found at 1–77 (MLYLTKIRNA…MALIGEYSAS (77 aa)). The H-T-H motif DNA-binding region spans 37-56 (SRQMAKQLGISQSSIVKFAQ). Positions 128 to 266 (IIEVISKAPF…LLFVGLVQHQ (139 aa)) constitute an SIS domain.

As to quaternary structure, homotetramer.

The protein operates within amino-sugar metabolism; N-acetylmuramate degradation [regulation]. Its function is as follows. Represses the expression of the murPQ operon involved in the uptake and degradation of N-acetylmuramic acid (MurNAc). Binds to two adjacent inverted repeats within the operator region. MurNAc 6-phosphate, the substrate of MurQ, is the specific inducer that weakens binding of MurR to the operator. The polypeptide is HTH-type transcriptional regulator MurR (Shigella flexneri serotype 5b (strain 8401)).